The chain runs to 238 residues: Uracil-DNA glycosylase (238 aa).

Asp-81 acts as the Proton acceptor in catalysis.

This sequence belongs to the uracil-DNA glycosylase (UDG) superfamily. UNG family.

The protein localises to the cytoplasm. It carries out the reaction Hydrolyzes single-stranded DNA or mismatched double-stranded DNA and polynucleotides, releasing free uracil.. Excises uracil residues from the DNA which can arise as a result of misincorporation of dUMP residues by DNA polymerase or due to deamination of cytosine. This chain is Uracil-DNA glycosylase, found in Corynebacterium efficiens (strain DSM 44549 / YS-314 / AJ 12310 / JCM 11189 / NBRC 100395).